The sequence spans 113 residues: UPF0251 protein TK0562 (113 aa).

This sequence belongs to the UPF0251 family.

The polypeptide is UPF0251 protein TK0562 (Thermococcus kodakarensis (strain ATCC BAA-918 / JCM 12380 / KOD1) (Pyrococcus kodakaraensis (strain KOD1))).